We begin with the raw amino-acid sequence, 162 residues long: Ribosome maturation factor RimP (162 aa).

Belongs to the RimP family.

The protein localises to the cytoplasm. Functionally, required for maturation of 30S ribosomal subunits. In Streptococcus gordonii (strain Challis / ATCC 35105 / BCRC 15272 / CH1 / DL1 / V288), this protein is Ribosome maturation factor RimP.